Reading from the N-terminus, the 431-residue chain is IMP-specific 5'-nucleotidase 1 (431 aa).

ATP is bound at residue K117. Residue D157 is the Nucleophile of the active site. IMP-binding residues include D157, D159, D165, T193, D349, and K357. 2 residues coordinate Mg(2+): D157 and D159. Residue D159 is the Proton donor of the active site. D388 provides a ligand contact to Mg(2+).

The protein belongs to the ISN1 family. Homotetramer. It depends on Mg(2+) as a cofactor.

The enzyme catalyses IMP + H2O = inosine + phosphate. Its activity is regulated as follows. Allosterically activated by ATP. ATP binding is a prerequisite to magnesium and substrate binding. ATP binds to 2 of the subunits in the homotetramer inducing a closure of these 2 subunits and the release of the C-terminal loop, thereby activating the enzyme. Functionally, IMP-specific 5'-nucleotidase involved in IMP (inositol monophosphate) degradation. This chain is IMP-specific 5'-nucleotidase 1 (isn-1), found in Neurospora crassa (strain ATCC 24698 / 74-OR23-1A / CBS 708.71 / DSM 1257 / FGSC 987).